We begin with the raw amino-acid sequence, 112 residues long: C-X-C motif chemokine 6 (112 aa).

The N-terminal stretch at 1–36 (MRLLSSRAARVSGPSGSLCALLALLLLTPPGPLASA) is a signal peptide. 2 cysteine pairs are disulfide-bonded: Cys48–Cys74 and Cys50–Cys90.

It belongs to the intercrine alpha (chemokine CxC) family.

It is found in the secreted. Its function is as follows. Chemotactic for neutrophil granulocytes. Signals through binding and activation of its receptors (CXCR1 and CXCR2). In addition to its chemotactic and angiogenic properties, it has strong antibacterial activity against Gram-positive and Gram-negative bacteria (90-fold-higher when compared to CXCL5 and CXCL7). The chain is C-X-C motif chemokine 6 (CXCL6) from Bos taurus (Bovine).